The chain runs to 434 residues: MDIVLVGLNHKTAPVDIRECFAFDSLEADAGLKELSRIPELTEAVLISTCNRVEIAAACQDPDEGIAAIKDFFSRTKSMPLENFEQNLFVYKGDEAVQHVFRVASSLDSMVLGEPQILGQMKESYRLATQAKTTGAVLNRLMHRCFMTAKRVRKETGIGDHAVSISYAAVELARKIFGELTDKKVLLIGAGEMAELAVEHLLNHRAAGVFVANRTFERAVALAERFRGTPIRLEEVEEHLKIADIIISSTGAPGYVLEKKDVKKVLRARKNRPLFFIDIAVPRDIDPAINNLSNNFVYDIDDLQGVIDRNIDERQKEAVRAERIVDENVIKYRTWLEGLDIVPTIVSLQKKLEAIRQAEMAKSLANIPEIDEKGREAIERLTQSIINKVMHDPIQFLKAGGHREKQKKEVLGFTRDIFNLNNPQNGDEFTPDEE.

Substrate contacts are provided by residues 49–52 (TCNR), Ser109, 114–116 (EPQ), and Gln120. Cys50 acts as the Nucleophile in catalysis. 189–194 (GAGEMA) lines the NADP(+) pocket.

This sequence belongs to the glutamyl-tRNA reductase family. As to quaternary structure, homodimer.

The catalysed reaction is (S)-4-amino-5-oxopentanoate + tRNA(Glu) + NADP(+) = L-glutamyl-tRNA(Glu) + NADPH + H(+). It participates in porphyrin-containing compound metabolism; protoporphyrin-IX biosynthesis; 5-aminolevulinate from L-glutamyl-tRNA(Glu): step 1/2. Catalyzes the NADPH-dependent reduction of glutamyl-tRNA(Glu) to glutamate 1-semialdehyde (GSA). This chain is Glutamyl-tRNA reductase, found in Desulfatibacillum aliphaticivorans.